Reading from the N-terminus, the 218-residue chain is Mediator of RNA polymerase II transcription subunit 20 (218 aa).

It belongs to the Mediator complex subunit 20 family. As to quaternary structure, component of the Mediator complex.

Its subcellular location is the nucleus. In terms of biological role, component of the Mediator complex, a coactivator involved in the regulated transcription of nearly all RNA polymerase II-dependent genes. Mediator functions as a bridge to convey information from gene-specific regulatory proteins to the basal RNA polymerase II transcription machinery. Mediator is recruited to promoters by direct interactions with regulatory proteins and serves as a scaffold for the assembly of a functional preinitiation complex with RNA polymerase II and the general transcription factors. The polypeptide is Mediator of RNA polymerase II transcription subunit 20 (SRB2) (Yarrowia lipolytica (strain CLIB 122 / E 150) (Yeast)).